The primary structure comprises 211 residues: MGQKSNPIGLRLKIINTWDSLWYANKDYTTKLHEDFLLRKFIKKAFYHASISKVVIARKVDVIMVNVYSAKPGVIIGKKGADIDKVKQQIVKMINNNIELNIIEVKKPELKAVLIAENIAQQLEKRISFRRAMKRSVQSCLKIGAKGIKVSCAGRLGGAEIARTEWYKEGSVPLHTFRANIDYGFSEAKTIYGIIGVKVWVYLGDTKSSNE.

Positions 38–106 constitute a KH type-2 domain; sequence LRKFIKKAFY…NIELNIIEVK (69 aa).

Belongs to the universal ribosomal protein uS3 family. In terms of assembly, part of the 30S ribosomal subunit. Forms a tight complex with proteins S10 and S14.

Its function is as follows. Binds the lower part of the 30S subunit head. Binds mRNA in the 70S ribosome, positioning it for translation. In Ehrlichia chaffeensis (strain ATCC CRL-10679 / Arkansas), this protein is Small ribosomal subunit protein uS3.